Here is a 185-residue protein sequence, read N- to C-terminus: Bcl-2-modifying factor (185 aa).

Positions 1–28 (MEPPQCVEELEDDVFQPEDGEPGTQPGS) are disordered. Residues 8–21 (EELEDDVFQPEDGE) are compositionally biased toward acidic residues. Residues 67 to 75 (DKATQTLSP) form an interaction with DLC2 region. A BH3 motif is present at residues 134 to 148 (IARKLQCIADQFHRL).

It belongs to the Bcl-2 family. As to quaternary structure, interacts with MCL1, BCL2, BCL2L1/BCL-Xl, BCL2A1 and BCL2L2/BCL-w. Interacts with the myosin V actin motor complex through its binding to DLC2.

Its function is as follows. May play a role in apoptosis. In Rattus norvegicus (Rat), this protein is Bcl-2-modifying factor (Bmf).